A 405-amino-acid polypeptide reads, in one-letter code: Potassium channel subfamily K member 18 (405 aa).

The chain crosses the membrane as a helical span at residues Leu-43–Phe-63. Asn-94 carries N-linked (GlcNAc...) asparagine glycosylation. Positions Phe-125–Gly-151 form an intramembrane region, pore-forming. K(+) contacts are provided by Thr-138, Val-139, Gly-140, and Tyr-141. Residues Thr-138–His-143 form a selectivity filter 1 region. Residues Phe-153–Ile-173 form a helical membrane-spanning segment. The interaction with calcineurin stretch occupies residues Pro-221 to Asp-226. The segment at Arg-272–Pro-277 is interaction with YWHAH. Phosphoserine occurs at positions 275 and 287. The chain crosses the membrane as a helical span at residues Ile-304–Leu-324. Positions Phe-337–Asp-351 form an intramembrane region, pore-forming. Residues Thr-346–Asp-351 are selectivity filter 2. The helical transmembrane segment at His-358–Phe-378 threads the bilayer.

It belongs to the two pore domain potassium channel (TC 1.A.1.8) family. As to quaternary structure, homodimer. Heterodimer with KCNK2. Heterodimer with KCNK10. Interacts with calcineurin. Interacts with YWHAH, in a phosphorylation-dependent manner. In terms of processing, phosphorylation of Ser-275 is required for the binding of 14-3-3eta/YWHAH. Calcineurin-mediated dephosphorylation of Ser-287 enhances channel activity. Post-translationally, N-glycosylated.

It is found in the cell membrane. It carries out the reaction K(+)(in) = K(+)(out). With respect to regulation, activated by volatile anesthetics, such as isoflurane and inhibited by local anesthetics such as bupivacaine and lidocaine. Inhibited by extracellular acidic pH. Inhibited by Zn(2+) ions. Functionally, k(+) channel that conducts outward and inward rectifying currents at depolarized and hyperpolarized membrane potentials, respectively. The outward rectifying currents are voltage-dependent, coupled to K(+) electrochemical gradient across the membrane, whereas the inward currents can be induced in response to activation of Ca(2+)-mobilizing receptors. Homo- and heterodimerizes to form functional channels with distinct regulatory and gating properties. In trigeminal ganglia sensory neurons, the heterodimers of KCNK18/TRESK and KCNK2/TREK-1 or KCNK10/TREK-2 inhibit neuronal firing and neurogenic inflammation by stabilizing the resting membrane potential at K(+) equilibrium potential as well as by regulating the threshold of action potentials and the spike frequency. In thymocytes, conducts K(+) currents upon T cell receptor (TCR) signaling leading to sustained Ca(2+) influx and NF-kappa-B activation, FOXP3 transcription and positive selection of regulatory T cell (Treg) progenitor subsets. Appears to mediate the analgesics effects of hydroxy-alpha-sanshool, a metabolite naturally present in Schezuan pepper and other Xanthoxylum plants. This Rattus norvegicus (Rat) protein is Potassium channel subfamily K member 18 (Kcnk18).